A 408-amino-acid chain; its full sequence is uncharacterized protein (408 aa).

2 disordered regions span residues 184–206 (DENN…SILF) and 254–317 (NNKT…SSDS). Over residues 187-206 (NNNSNNNNNNNSNNNSSILF) the composition is skewed to low complexity.

This is an uncharacterized protein from Dictyostelium discoideum (Social amoeba).